The chain runs to 616 residues: MRFAKALAITAVLLSGVVEATSDAVIEEALKAPTINPLPGPVTWYLHADEGRKYLAPFVSYHGPHKSGIRDAWERCYSTIRRLKWYPQALEGPIPKFDPFPDQSSKPKEKRQNAPPGAMIRRVRVKVKDVDAKLAHKVDESYSLTVSAKSEAIEIEAQTPWGARHAFTTLQQIVVYDEKSQRFYIERPFTISEGPLYPIRGILLDSGRNFISPSKIKEQLDAMALSKLNVLHWHITDTQSWPLQVNTYPQMTEDAYSKRMVYSHATIKEIIEYARQRGIRVIPEIDTPSHSSSGWKRIDPDLVACGNSWWSNDFFPHHTALEPNPGQLDIAYNKTYEVLENLYKEVSSLFEDEFHHLGGDELQPNCYKFSKHVTKWLAEHPDMTLNDLLQEYVDRTLPALDKIKHRRFIYWEDMLLSEQIHAERIPRNVVLQTWNGGLDNIKKLTSNGYDVIVSSADFFYLDCGNGGWVSNDPRYNVMRNPTPGTPNFNYGGDGGSWCAPYKTWQRIYDYDFASELTGPEKEHILGGIAPLWSEQIDDANITPKFWPRAAALAELLWSGNRDKEGKKRTYLMTARINNFREYLTANGIGAAPLQPRYCLKHPHHCDLYSDPNAVLG.

The signal sequence occupies residues 1-20 (MRFAKALAITAVLLSGVVEA). The disordered stretch occupies residues 96-117 (KFDPFPDQSSKPKEKRQNAPPG). The N-linked (GlcNAc...) asparagine glycan is linked to Asn333. Glu361 functions as the Proton donor in the catalytic mechanism.

This sequence belongs to the glycosyl hydrolase 20 family.

The protein localises to the secreted. It carries out the reaction Hydrolysis of terminal non-reducing N-acetyl-D-hexosamine residues in N-acetyl-beta-D-hexosaminides.. Its function is as follows. Beta-hexosaminidase that shows a broad substrate specificity. The chain is Probable beta-hexosaminidase ARB_01353 from Arthroderma benhamiae (strain ATCC MYA-4681 / CBS 112371) (Trichophyton mentagrophytes).